A 1047-amino-acid polypeptide reads, in one-letter code: FACT complex subunit SPT16 (1047 aa).

Position 2 is an N-acetylalanine (Ala2). The residue at position 139 (Lys139) is an N6-acetyllysine. Phosphoserine is present on Ser188. An N6-acetyllysine mark is found at Lys196 and Lys223. Position 455 is a phosphoserine (Ser455). A coiled-coil region spans residues 465–507 (RNEMTAEEKRRAHQKELAAQLNEEAKRRLTEQKGEQQIQKARK). The interval 491–518 (RRLTEQKGEQQIQKARKSNVSYKNPSLM) is disordered. Lys497 participates in a covalent cross-link: Glycyl lysine isopeptide (Lys-Gly) (interchain with G-Cter in SUMO2). Residues 499 to 514 (EQQIQKARKSNVSYKN) are compositionally biased toward polar residues. At Ser508 the chain carries Phosphoserine. At Lys513 the chain carries N6-acetyllysine; alternate. Lys513 is covalently cross-linked (Glycyl lysine isopeptide (Lys-Gly) (interchain with G-Cter in SUMO2); alternate). Lys647 is covalently cross-linked (Glycyl lysine isopeptide (Lys-Gly) (interchain with G-Cter in SUMO2)). A phosphoserine mark is found at Ser650 and Ser658. An N6-acetyllysine mark is found at Lys732 and Lys786. A Phosphothreonine modification is found at Thr903. Lys904 is modified (N6-acetyllysine). Residues 918–1047 (EQGGWSFLEP…SSAPPKKKRK (130 aa)) are disordered. A compositionally biased stretch (acidic residues) spans 927 to 973 (PEGEGSDAEDGDSESEIEDETFNPSEDDYEEEEEDSDEDYSSEAEES). Phosphoserine is present on residues Ser979, Ser982, Ser986, and Ser1015. Positions 985-1005 (ESGKDWDELEEEARKADRESR) are enriched in basic and acidic residues. Over residues 1024-1039 (VHSSGRGSNRGSRHSS) the composition is skewed to low complexity.

This sequence belongs to the peptidase M24 family. SPT16 subfamily. As to quaternary structure, interacts with MYOG (via C-terminal region). Component of the FACT complex, a stable heterodimer of SSRP1 and SUPT16H. Also a component of a CK2-SPT16-SSRP1 complex which forms following UV irradiation, composed of SSRP1, SUPT16H, CSNK2A1, CSNK2A2 and CSNK2B. Interacts with NEK9. Binds to histone H2A-H2B. Identified in a centromere complex containing histones H2A, H2B and H4, and at least CENPA, CENPB, CENPC, CENPT, CENPN, HJURP, SUPT16H, SSRP1 and RSF1. Interacts with GTF2E2. ADP-ribosylated. ADP-ribosylation by PARP1 is induced by genotoxic stress and correlates with dissociation of FACT from chromatin. As to expression, widely expressed. Expressed in brain, liver, heart, kidneys, lungs, spleen, thymus, ovary, and testes, with highest levels of expression observed in thymus.

The protein resides in the nucleus. It localises to the chromosome. In terms of biological role, component of the FACT complex, a general chromatin factor that acts to reorganize nucleosomes. The FACT complex is involved in multiple processes that require DNA as a template such as mRNA elongation, DNA replication and DNA repair. During transcription elongation the FACT complex acts as a histone chaperone that both destabilizes and restores nucleosomal structure. It facilitates the passage of RNA polymerase II and transcription by promoting the dissociation of one histone H2A-H2B dimer from the nucleosome, then subsequently promotes the reestablishment of the nucleosome following the passage of RNA polymerase II. The FACT complex is probably also involved in phosphorylation of 'Ser-392' of p53/TP53 via its association with CK2 (casein kinase II). The chain is FACT complex subunit SPT16 (Supt16h) from Mus musculus (Mouse).